A 32-amino-acid polypeptide reads, in one-letter code: Tail virion protein G7P (32 aa).

A helical membrane pass occupies residues L9 to G29.

This sequence belongs to the inovirus G7P protein family.

It is found in the virion. The protein resides in the host membrane. In terms of biological role, may initiate with G9P the virion concomitant assembly-budding process, by interacting with the packaging signal of the viral genome. The assembly-budding takes place at the host inner membrane. In turn, G7P and G9P are present at the end of the filamentous virion that emerges first from the bacterial host. In Escherichia phage If1 (Bacteriophage If1), this protein is Tail virion protein G7P (VII).